The chain runs to 263 residues: Versicolorin reductase 1 (263 aa).

4 residues coordinate NADP(+): I22, D68, N95, and R128. Residues S144 and S145 each act as proton donor in the active site. Y159, K163, I192, and T194 together coordinate NADP(+). Y159 acts as the Proton acceptor in catalysis. K163 serves as the catalytic Lowers pKa of active site Tyr.

This sequence belongs to the short-chain dehydrogenases/reductases (SDR) family.

It is found in the cytoplasm. The protein localises to the cytosol. Its pathway is mycotoxin biosynthesis. In terms of biological role, versicolorin reductase; part of the fragmented gene cluster that mediates the biosynthesis of dothistromin (DOTH), a polyketide toxin very similar in structure to the aflatoxin precursor, versicolorin B. The first step of the pathway is the conversion of acetate to norsolorinic acid (NOR) and requires the fatty acid synthase subunits hexA and hexB, as well as the polyketide synthase pksA. PksA combines a hexanoyl starter unit and 7 malonyl-CoA extender units to synthesize the precursor NOR. The hexanoyl starter unit is provided to the acyl-carrier protein (ACP) domain by the fungal fatty acid synthase hexA/hexB. The second step is the conversion of NOR to averantin (AVN) and requires the norsolorinic acid ketoreductase nor1, which catalyzes the dehydration of norsolorinic acid to form (1'S)-averantin. The cytochrome P450 monooxygenase avnA then catalyzes the hydroxylation of AVN to 5'hydroxyaverantin (HAVN). The next step is performed by adhA that transforms HAVN to averufin (AVF). Averufin might then be converted to hydroxyversicolorone by cypX and avfA. Hydroxyversicolorone is further converted versiconal hemiacetal acetate (VHA) by moxY. VHA is then the substrate for the versiconal hemiacetal acetate esterase est1 to yield versiconal (VAL). Versicolorin B synthase vbsA then converts VAL to versicolorin B (VERB) by closing the bisfuran ring. Then, the activity of the versicolorin B desaturase verB leads to versicolorin A (VERA). DotB, a predicted chloroperoxidase, may perform epoxidation of the A-ring of VERA. Alternatively, a cytochrome P450, such as cypX or avnA could catalyze this step. It is also possible that another, uncharacterized, cytochrome P450 enzyme is responsible for this step. Opening of the epoxide could potentially be achieved by the epoxide hydrolase epoA. However, epoA seems not to be required for DOTH biosynthesis, but other epoxide hydrolases may have the ability to complement this hydrolysis. Alternatively, opening of the epoxide ring could be achieved non-enzymatically. The next step is the deoxygenation of ring A to yield the 5,8-dihydroxyanthraquinone which is most likely catalyzed by the NADPH dehydrogenase encoded by ver1. The last stages of DOTH biosynthesis are proposed to involve hydroxylation of the bisfuran. OrdB and norB might have oxidative roles here. An alternative possibility is that cytochrome P450 monoogenases such as avnA and cypX might perform these steps in addition to previously proposed steps. The protein is Versicolorin reductase 1 of Dothistroma septosporum (Red band needle blight fungus).